The sequence spans 687 residues: Macrolide export ATP-binding/permease protein MacB (687 aa).

Residues 6–244 form the ABC transporter domain; the sequence is LKLAAVTRRF…LAEAGVDAAE (239 aa). An ATP-binding site is contributed by 42–49; it reads GASGSGKS. The segment covering 246-256 has biased composition (low complexity); that stretch reads AEASEAAVGES. The segment at 246-281 is disordered; it reads AEASEAAVGESPTRNRHDTPAPPAAVDTDPHVDTGT. The next 4 helical transmembrane spans lie at 312-332, 560-580, 617-637, and 650-670; these read LLTM…VAIG, LTLL…IGVM, LVCL…GALF, and AGAI…FGFM.

The protein belongs to the ABC transporter superfamily. Macrolide exporter (TC 3.A.1.122) family. Homodimer.

Its subcellular location is the cell inner membrane. Its function is as follows. Non-canonical ABC transporter that contains transmembrane domains (TMD), which form a pore in the inner membrane, and an ATP-binding domain (NBD), which is responsible for energy generation. Confers resistance against macrolides. The polypeptide is Macrolide export ATP-binding/permease protein MacB (Burkholderia lata (strain ATCC 17760 / DSM 23089 / LMG 22485 / NCIMB 9086 / R18194 / 383)).